The following is a 596-amino-acid chain: MRQRTPFARPGLLASAALALVLGPLAASAQEQVAPPKDPAAALEDHKTRTDNRYEPSLDNLAQQDVAAPGAPEGVSALSDAQYNEANKIYFERCAGCHGVLRKGATGKALTPDLTRDLGFDYLQSFITYGSPAGMPNWGTSGELSAEQVDLMANYLLLDPAAPPEFGMKEMRESWKVHVAPEDRPTQQENDWDLENLFSVTLRDAGQIALIDGATYEIKSVLDTGYAVHISRLSASGRYLFVIGRDGKVNMIDLWMKEPTTVAEIKIGSEARSIETSKMEGWEDKYAIAGAYWPPQYVIMDGETLEPKKIQSTRGMTYDEQEYHPEPRVAAILASHYRPEFIVNVKETGKILLVDYTDLDNLKTTEISAERFLHDGGLDGSHRYFITAANARNKLVVIDTKEGKLVAIEDTGGQTPHPGRGANFVHPTFGPVWATSHMGDDSVALIGTDPEGHPDNAWKILDSFPALGGGSLFIKTHPNSQYLYVDATLNPEAEISGSVAVFDIKAMTGDGSDPEFKTLPIAEWAGITEGQPRVVQGEFNKDGTEVWFSVWNGKDQESALVVVDDKTLELKHVIKDERLVTPTGKFNVYNTMTDTY.

The first 29 residues, 1–29 (MRQRTPFARPGLLASAALALVLGPLAASA), serve as a signal peptide directing secretion. The interval 30–76 (QEQVAPPKDPAAALEDHKTRTDNRYEPSLDNLAQQDVAAPGAPEGVS) is N-terminal tail. Residue H46 coordinates heme c. Residues Y54 and S57 each coordinate heme d1. The Cytochrome c domain occupies 77–162 (ALSDAQYNEA…ANYLLLDPAA (86 aa)). C94, C97, H98, K108, and Y122 together coordinate heme c. Positions 138, 203, 229, 232, 245, 272, 292, 420, 536, and 583 each coordinate heme d1. A D1-heme domain region spans residues 163 to 596 (PPEFGMKEMR…NVYNTMTDTY (434 aa)).

As to quaternary structure, homodimer. It depends on heme c as a cofactor. Heme is required as a cofactor.

Its subcellular location is the periplasm. The catalysed reaction is nitric oxide + Fe(III)-[cytochrome c] + H2O = Fe(II)-[cytochrome c] + nitrite + 2 H(+). It catalyses the reaction A + NH4(+) + H2O = hydroxylamine + AH2 + H(+). This is Nitrite reductase (nirS) from Paracoccus pantotrophus (Thiosphaera pantotropha).